The primary structure comprises 197 residues: Xanthine phosphoribosyltransferase (197 aa).

Xanthine contacts are provided by leucine 20 and asparagine 27. 5-phospho-alpha-D-ribose 1-diphosphate is bound at residue 128–132; sequence ANGQA. Lysine 156 lines the xanthine pocket.

It belongs to the purine/pyrimidine phosphoribosyltransferase family. Xpt subfamily. Homodimer.

The protein localises to the cytoplasm. The catalysed reaction is XMP + diphosphate = xanthine + 5-phospho-alpha-D-ribose 1-diphosphate. The protein operates within purine metabolism; XMP biosynthesis via salvage pathway; XMP from xanthine: step 1/1. Functionally, converts the preformed base xanthine, a product of nucleic acid breakdown, to xanthosine 5'-monophosphate (XMP), so it can be reused for RNA or DNA synthesis. In Bacillus cereus (strain ATCC 14579 / DSM 31 / CCUG 7414 / JCM 2152 / NBRC 15305 / NCIMB 9373 / NCTC 2599 / NRRL B-3711), this protein is Xanthine phosphoribosyltransferase.